The chain runs to 39 residues: Cytochrome b6-f complex subunit 5 (39 aa).

Residues 5 to 25 traverse the membrane as a helical segment; it reads LLCGIVLGLVPITIVGLFVSA.

Belongs to the PetG family. The 4 large subunits of the cytochrome b6-f complex are cytochrome b6, subunit IV (17 kDa polypeptide, PetD), cytochrome f and the Rieske protein, while the 4 small subunits are PetG, PetL, PetM and PetN. The complex functions as a dimer.

The protein localises to the cellular thylakoid membrane. Its function is as follows. Component of the cytochrome b6-f complex, which mediates electron transfer between photosystem II (PSII) and photosystem I (PSI), cyclic electron flow around PSI, and state transitions. PetG is required for either the stability or assembly of the cytochrome b6-f complex. This is Cytochrome b6-f complex subunit 5 from Prochlorococcus marinus (strain MIT 9211).